The chain runs to 95 residues: Large ribosomal subunit protein uL23 (95 aa).

Belongs to the universal ribosomal protein uL23 family. As to quaternary structure, part of the 50S ribosomal subunit. Contacts protein L29, and trigger factor when it is bound to the ribosome.

In terms of biological role, one of the early assembly proteins it binds 23S rRNA. One of the proteins that surrounds the polypeptide exit tunnel on the outside of the ribosome. Forms the main docking site for trigger factor binding to the ribosome. The protein is Large ribosomal subunit protein uL23 of Coxiella burnetii (strain CbuK_Q154) (Coxiella burnetii (strain Q154)).